A 94-amino-acid chain; its full sequence is Co-chaperonin GroES (94 aa).

This sequence belongs to the GroES chaperonin family. Heptamer of 7 subunits arranged in a ring. Interacts with the chaperonin GroEL.

It is found in the cytoplasm. Its function is as follows. Together with the chaperonin GroEL, plays an essential role in assisting protein folding. The GroEL-GroES system forms a nano-cage that allows encapsulation of the non-native substrate proteins and provides a physical environment optimized to promote and accelerate protein folding. GroES binds to the apical surface of the GroEL ring, thereby capping the opening of the GroEL channel. In Listeria innocua serovar 6a (strain ATCC BAA-680 / CLIP 11262), this protein is Co-chaperonin GroES.